A 585-amino-acid chain; its full sequence is Aspartate--tRNA ligase (585 aa).

Glutamate 171 is an L-aspartate binding site. The tract at residues 195 to 198 (QLFK) is aspartate. Position 217 (arginine 217) interacts with L-aspartate. ATP is bound by residues 217–219 (RDE) and glutamine 226. L-aspartate is bound at residue histidine 448. Glutamate 482 provides a ligand contact to ATP. Arginine 489 is an L-aspartate binding site. Residue 534–537 (GLDR) coordinates ATP.

The protein belongs to the class-II aminoacyl-tRNA synthetase family. Type 1 subfamily. In terms of assembly, homodimer.

The protein localises to the cytoplasm. It carries out the reaction tRNA(Asp) + L-aspartate + ATP = L-aspartyl-tRNA(Asp) + AMP + diphosphate. Its function is as follows. Catalyzes the attachment of L-aspartate to tRNA(Asp) in a two-step reaction: L-aspartate is first activated by ATP to form Asp-AMP and then transferred to the acceptor end of tRNA(Asp). This is Aspartate--tRNA ligase from Histophilus somni (strain 129Pt) (Haemophilus somnus).